We begin with the raw amino-acid sequence, 321 residues long: Digestive cysteine proteinase 3 (321 aa).

The N-terminal stretch at M1–A16 is a signal peptide. Residues S17–M106 constitute a propeptide, activation peptide. 3 disulfides stabilise this stretch: C127/C170, C161/C203, and C261/C310. The active site involves C130. Residues H268 and N288 contribute to the active site.

It belongs to the peptidase C1 family.

Inhibited by E-64, antipain, leupeptin, heavy metal ions, iodoacetic acid, dithionitrobenzene, p-hydroxymercuri-benzoate; activated by mercaptoethanol and dithiothreitol. In Homarus americanus (American lobster), this protein is Digestive cysteine proteinase 3 (LCP3).